Here is a 248-residue protein sequence, read N- to C-terminus: 1-(5-phosphoribosyl)-5-[(5-phosphoribosylamino)methylideneamino] imidazole-4-carboxamide isomerase (248 aa).

The active-site Proton acceptor is the aspartate 8. Aspartate 129 functions as the Proton donor in the catalytic mechanism.

The protein belongs to the HisA/HisF family.

It is found in the cytoplasm. It carries out the reaction 1-(5-phospho-beta-D-ribosyl)-5-[(5-phospho-beta-D-ribosylamino)methylideneamino]imidazole-4-carboxamide = 5-[(5-phospho-1-deoxy-D-ribulos-1-ylimino)methylamino]-1-(5-phospho-beta-D-ribosyl)imidazole-4-carboxamide. The protein operates within amino-acid biosynthesis; L-histidine biosynthesis; L-histidine from 5-phospho-alpha-D-ribose 1-diphosphate: step 4/9. The protein is 1-(5-phosphoribosyl)-5-[(5-phosphoribosylamino)methylideneamino] imidazole-4-carboxamide isomerase of Rhizobium leguminosarum bv. trifolii (strain WSM2304).